The following is a 308-amino-acid chain: HPr kinase/phosphorylase (308 aa).

Active-site residues include His-138 and Lys-159. 153 to 160 lines the ATP pocket; sequence GESGLGKS. Residue Ser-160 participates in Mg(2+) binding. The active-site Proton acceptor; for phosphorylation activity. Proton donor; for dephosphorylation activity is the Asp-177. The important for the catalytic mechanism of both phosphorylation and dephosphorylation stretch occupies residues 201–210; that stretch reads LEVRGLGLLD. Glu-202 is a binding site for Mg(2+). Arg-243 is a catalytic residue. Positions 264–269 are important for the catalytic mechanism of dephosphorylation; that stretch reads QVAAGR.

It belongs to the HPrK/P family. In terms of assembly, homohexamer. The cofactor is Mg(2+).

It catalyses the reaction [HPr protein]-L-serine + ATP = [HPr protein]-O-phospho-L-serine + ADP + H(+). The enzyme catalyses [HPr protein]-O-phospho-L-serine + phosphate + H(+) = [HPr protein]-L-serine + diphosphate. Functionally, catalyzes the ATP- as well as the pyrophosphate-dependent phosphorylation of a specific serine residue in HPr, a phosphocarrier protein of the phosphoenolpyruvate-dependent sugar phosphotransferase system (PTS). HprK/P also catalyzes the pyrophosphate-producing, inorganic phosphate-dependent dephosphorylation (phosphorolysis) of seryl-phosphorylated HPr (P-Ser-HPr). The sequence is that of HPr kinase/phosphorylase from Bordetella petrii (strain ATCC BAA-461 / DSM 12804 / CCUG 43448).